Consider the following 95-residue polypeptide: uncharacterized protein (95 aa).

This is an uncharacterized protein from Enterobacteria phage T4 (Bacteriophage T4).